A 95-amino-acid polypeptide reads, in one-letter code: Small ribosomal subunit protein uS19 (95 aa).

Positions 76–95 (PTRRFGGHADKKAATKGQVR) are disordered.

This sequence belongs to the universal ribosomal protein uS19 family.

Functionally, protein S19 forms a complex with S13 that binds strongly to the 16S ribosomal RNA. This Pseudothermotoga lettingae (strain ATCC BAA-301 / DSM 14385 / NBRC 107922 / TMO) (Thermotoga lettingae) protein is Small ribosomal subunit protein uS19.